The following is a 421-amino-acid chain: Flap endonuclease 1 (421 aa).

The interval 1-109 is N-domain; sequence MGIKGLAKLL…HELIKRREKR (109 aa). D34 lines the Mg(2+) pocket. Positions 47 and 75 each coordinate DNA. 5 residues coordinate Mg(2+): D91, E163, E165, D184, and D186. The interval 127 to 258 is I-domain; the sequence is EQDKQSKRLV…KTALKLIREH (132 aa). E163 is a DNA binding site. DNA-binding residues include G236 and D238. D238 contacts Mg(2+). The disordered stretch occupies residues 284 to 307; that stretch reads KKLDAQSDDDDEEGVESPSKEENN. The segment covering 289 to 298 has biased composition (acidic residues); it reads QSDDDDEEGV. The segment at 379 to 387 is interaction with PCNA; it reads PQTRMDSFF. Positions 398–421 are disordered; that stretch reads SAAKRKADAAKAKAAVSKKKTKKH.

The protein belongs to the XPG/RAD2 endonuclease family. FEN1 subfamily. As to quaternary structure, interacts with PCNA. Three molecules of FEN1 bind to one PCNA trimer with each molecule binding to one PCNA monomer. PCNA stimulates the nuclease activity without altering cleavage specificity. Mg(2+) is required as a cofactor. Post-translationally, phosphorylated. Phosphorylation upon DNA damage induces relocalization to the nuclear plasma.

Its subcellular location is the nucleus. It localises to the nucleolus. It is found in the nucleoplasm. The protein resides in the mitochondrion. Its function is as follows. Structure-specific nuclease with 5'-flap endonuclease and 5'-3' exonuclease activities involved in DNA replication and repair. During DNA replication, cleaves the 5'-overhanging flap structure that is generated by displacement synthesis when DNA polymerase encounters the 5'-end of a downstream Okazaki fragment. It enters the flap from the 5'-end and then tracks to cleave the flap base, leaving a nick for ligation. Also involved in the long patch base excision repair (LP-BER) pathway, by cleaving within the apurinic/apyrimidinic (AP) site-terminated flap. Acts as a genome stabilization factor that prevents flaps from equilibrating into structures that lead to duplications and deletions. Also possesses 5'-3' exonuclease activity on nicked or gapped double-stranded DNA, and exhibits RNase H activity. Also involved in replication and repair of rDNA and in repairing mitochondrial DNA. The sequence is that of Flap endonuclease 1 from Phaeodactylum tricornutum (strain CCAP 1055/1).